Consider the following 446-residue polypeptide: Oxysterols receptor LXR-beta (446 aa).

Over residues 1–28 the composition is skewed to low complexity; sequence MSSPTSSLDTPLPGNGSPQPSTSSTSPT. A disordered region spans residues 1-69; that stretch reads MSSPTSSLDT…PERKRKKGPA (69 aa). Residues 1 to 76 form a transactivation AF-1; required for ligand-independent transactivation function region; that stretch reads MSSPTSSLDT…GPAPKMLGHE (76 aa). Positions 75–152 form a DNA-binding region, nuclear receptor; the sequence is HELCRVCGDK…AGMREQCVLS (78 aa). 2 consecutive NR C4-type zinc fingers follow at residues 78–98 and 116–140; these read CRVC…CEGC and CRGS…LRKC. Positions 160 to 201 are disordered; it reads KIQKQQQQQPPPPTEPASGSSARPAASPGTSEASSQGSGEGE. A compositionally biased stretch (low complexity) spans 175-196; that stretch reads PASGSSARPAASPGTSEASSQG. The transactivation AF-2; required for ligand-dependent transactivation function; mediates interaction with CCAR2 stretch occupies residues 205 to 446; that stretch reads LTAAQELMIQ…LLSEIWDVHE (242 aa). One can recognise an NR LBD domain in the interval 208–446; the sequence is AQELMIQQLV…LLSEIWDVHE (239 aa). Residues Lys-395 and Lys-433 each participate in a glycyl lysine isopeptide (Lys-Gly) (interchain with G-Cter in SUMO2) cross-link.

It belongs to the nuclear hormone receptor family. NR1 subfamily. In terms of assembly, forms a heterodimer with RXR. Interacts with CCAR2 (via N-terminus) in a ligand-independent manner. Interacts (when sumoylated) with GPS2; interaction with GPS2 onto hepatic acute phase protein promoters prevents N-Cor corepressor complex dissociation. Interacts with ABCA12 and ABCA1; this interaction is required for ABCA1 localization to the cell surface and is necessary for its normal activity and stability. Post-translationally, sumoylated by SUMO2 at Lys-395 and Lys-433 during the hepatic acute phase response, leading to promote interaction with GPS2 and prevent N-Cor corepressor complex dissociation.

Its subcellular location is the nucleus. Functionally, nuclear receptor that exhibits a ligand-dependent transcriptional activation activity. Binds preferentially to double-stranded oligonucleotide direct repeats having the consensus half-site sequence 5'-AGGTCA-3' and 4-nt spacing (DR-4). Regulates cholesterol uptake through MYLIP-dependent ubiquitination of LDLR, VLDLR and LRP8; DLDLR and LRP8. Interplays functionally with RORA for the regulation of genes involved in liver metabolism. Induces LPCAT3-dependent phospholipid remodeling in endoplasmic reticulum (ER) membranes of hepatocytes, driving SREBF1 processing and lipogenesis. Via LPCAT3, triggers the incorporation of arachidonate into phosphatidylcholines of ER membranes, increasing membrane dynamics and enabling triacylglycerols transfer to nascent very low-density lipoprotein (VLDL) particles. Via LPCAT3 also counteracts lipid-induced ER stress response and inflammation, likely by modulating SRC kinase membrane compartmentalization and limiting the synthesis of lipid inflammatory mediators. Plays an anti-inflammatory role during the hepatic acute phase response by acting as a corepressor: inhibits the hepatic acute phase response by preventing dissociation of the N-Cor corepressor complex. This Rattus norvegicus (Rat) protein is Oxysterols receptor LXR-beta (Nr1h2).